The chain runs to 466 residues: ATP synthase subunit beta (466 aa).

ATP is bound at residue 148-155 (GGAGVGKT).

The protein belongs to the ATPase alpha/beta chains family. In terms of assembly, F-type ATPases have 2 components, CF(1) - the catalytic core - and CF(0) - the membrane proton channel. CF(1) has five subunits: alpha(3), beta(3), gamma(1), delta(1), epsilon(1). CF(0) has three main subunits: a(1), b(2) and c(9-12). The alpha and beta chains form an alternating ring which encloses part of the gamma chain. CF(1) is attached to CF(0) by a central stalk formed by the gamma and epsilon chains, while a peripheral stalk is formed by the delta and b chains.

The protein localises to the cell inner membrane. It carries out the reaction ATP + H2O + 4 H(+)(in) = ADP + phosphate + 5 H(+)(out). In terms of biological role, produces ATP from ADP in the presence of a proton gradient across the membrane. The catalytic sites are hosted primarily by the beta subunits. This chain is ATP synthase subunit beta, found in Xylella fastidiosa (strain M12).